A 462-amino-acid polypeptide reads, in one-letter code: tRNA modification GTPase MnmE (462 aa).

The (6S)-5-formyl-5,6,7,8-tetrahydrofolate site is built by Arg-34, Glu-92, and Lys-131. Residues 227-386 (GLQVVIAGKP…LIDAITAHAG (160 aa)) enclose the TrmE-type G domain. Asn-237 is a binding site for K(+). GTP-binding positions include 237 to 242 (NAGKSS), 256 to 262 (TDIAGTT), and 281 to 284 (DTAG). Ser-241 is a binding site for Mg(2+). The K(+) site is built by Thr-256, Ile-258, and Thr-261. A Mg(2+)-binding site is contributed by Thr-262. Lys-462 is a (6S)-5-formyl-5,6,7,8-tetrahydrofolate binding site.

It belongs to the TRAFAC class TrmE-Era-EngA-EngB-Septin-like GTPase superfamily. TrmE GTPase family. As to quaternary structure, homodimer. Heterotetramer of two MnmE and two MnmG subunits. It depends on K(+) as a cofactor.

It localises to the cytoplasm. Exhibits a very high intrinsic GTPase hydrolysis rate. Involved in the addition of a carboxymethylaminomethyl (cmnm) group at the wobble position (U34) of certain tRNAs, forming tRNA-cmnm(5)s(2)U34. This is tRNA modification GTPase MnmE from Acinetobacter baylyi (strain ATCC 33305 / BD413 / ADP1).